The following is a 498-amino-acid chain: MTYLLALDQGTSSSRSIVFDERGHIVAQAQLELPQIYPQPGWVEHDPLEIWRTQIATARDALAKAGIAANAVRAVGITNQRETTVLWNRKTGQPVHHAIVWQDRRAEPACAQLREQGHAATIQAKTGLLIDAYFSGTKLQWLLDHVPGARDAAEAGELAFGTVDSWLIWQLTGGKRHVTDVSNASRTMLFNVHTNQWDDELLQLLRIPRALMPEVLPSASDFGATDAALLGGPIAIGGVAGDQQSALFGQACFTAGMAKNTYGTGCFMLMHTGSRFQKSENGLLTTSAAQAGQSPEYAMEGSVFVGGAVVQWLRDGLRAISASSEVQALAESVPDSGGVMMVPAFTGLGAPYWKPDARGTITGLTRGTTIAHIARAALESIAYQSAALLAAMSRDAVAAGGAPVSELRVDGGACVNDLLMQFQADLLGIPVVRPAVVETTALGAAYLAGLASGVYASTDELSALWQAERRFTPTLPRSQAEALMARWEHAVAQAVLPG.

Residue T11 participates in ADP binding. ATP is bound by residues T11, S12, and S13. Residue T11 coordinates sn-glycerol 3-phosphate. Residue R15 participates in ADP binding. Sn-glycerol 3-phosphate is bound by residues R81, E82, Y133, and D242. Glycerol is bound by residues R81, E82, Y133, D242, and Q243. Residues T264 and G307 each contribute to the ADP site. ATP is bound by residues T264, G307, Q311, and G412. ADP-binding residues include G412 and N416.

This sequence belongs to the FGGY kinase family.

The catalysed reaction is glycerol + ATP = sn-glycerol 3-phosphate + ADP + H(+). It functions in the pathway polyol metabolism; glycerol degradation via glycerol kinase pathway; sn-glycerol 3-phosphate from glycerol: step 1/1. Its activity is regulated as follows. Inhibited by fructose 1,6-bisphosphate (FBP). Its function is as follows. Key enzyme in the regulation of glycerol uptake and metabolism. Catalyzes the phosphorylation of glycerol to yield sn-glycerol 3-phosphate. The polypeptide is Glycerol kinase (Acidovorax sp. (strain JS42)).